Consider the following 476-residue polypeptide: MASNNVGRVTQILGAVVDVQFDGELPFIQNALQTRIGDRTLILEVAQELGERTVRAIAMDSTDGLVRGAEVEDLGRPITVPVGPGTLGRILNVIGEPIDERGPVDAKKTYSIHREAPSFEEQAASAEILVTGIKVVDLLAPYLKGGKIGLFGGAGVGKTVLIQELINNIAKAHGGVSVFAGVGERTREGNDLYHEMIDAGVIKLGENTTEGSKVALVYGQMNEPPGARARVALSGLSIAEYFRDEEGQDVLFFVDNIFRFTQAGAEVSALLGRIPSAVGYQPTLATDMGALQERITSTKKGSITSVQAIYVPADDLTDPAPATSFAHLDATTVLNRAISEKGIYPAVDPLDSTSRSLDPRIVGEEHYKVARDVQRILQTYKSLQDIIAILGMDELSEEDKLTVARARKIERFMSQPFHVAEVFTGSPGVFVSIEDTVRSFKEIVEGKHDDLPEAAFLMVGTIEDARKKAEALKAKA.

152–159 (GGAGVGKT) contacts ATP.

The protein belongs to the ATPase alpha/beta chains family. F-type ATPases have 2 components, CF(1) - the catalytic core - and CF(0) - the membrane proton channel. CF(1) has five subunits: alpha(3), beta(3), gamma(1), delta(1), epsilon(1). CF(0) has three main subunits: a(1), b(2) and c(9-12). The alpha and beta chains form an alternating ring which encloses part of the gamma chain. CF(1) is attached to CF(0) by a central stalk formed by the gamma and epsilon chains, while a peripheral stalk is formed by the delta and b chains.

It localises to the cell inner membrane. The enzyme catalyses ATP + H2O + 4 H(+)(in) = ADP + phosphate + 5 H(+)(out). Its function is as follows. Produces ATP from ADP in the presence of a proton gradient across the membrane. The catalytic sites are hosted primarily by the beta subunits. This is ATP synthase subunit beta from Granulibacter bethesdensis (strain ATCC BAA-1260 / CGDNIH1).